The primary structure comprises 89 residues: Large ribosomal subunit protein bL31B (89 aa).

Belongs to the bacterial ribosomal protein bL31 family. Type B subfamily. In terms of assembly, part of the 50S ribosomal subunit.

In Aeromonas hydrophila subsp. hydrophila (strain ATCC 7966 / DSM 30187 / BCRC 13018 / CCUG 14551 / JCM 1027 / KCTC 2358 / NCIMB 9240 / NCTC 8049), this protein is Large ribosomal subunit protein bL31B.